A 755-amino-acid polypeptide reads, in one-letter code: von Willebrand factor A domain-containing protein 2 (755 aa).

The N-terminal stretch at 1 to 23 is a signal peptide; the sequence is MPPFLLLEAVCVFLFSRVPPSLP. A VWFA 1 domain is found at 51–222; sequence DIMFLLDGSN…DATNGLFSTL (172 aa). Residue N147 is glycosylated (N-linked (GlcNAc...) asparagine). An EGF-like 1 domain is found at 296-333; it reads PGPCDSQPCQNGGTCVPEGLDGYQCLCPLAFGGEANCA. 3 disulfide bridges follow: C299–C310, C304–C320, and C322–C332. VWFA domains are found at residues 343 to 517 and 531 to 705; these read DLLF…QGKL and DLVF…IEWL. Residues 712 to 748 form the EGF-like 2 domain; sequence PVNLCKPSPCMNEGSCVLQNGSYRCKCRDGWEGPHCE. Cystine bridges form between C716-C727, C721-C736, and C738-C747.

Forms monomers and multimers. A 55 kDa form is produced by proteolytic cleavage. Expression is generally absent in normal colon and other normal body tissues, but it is induced an average of 78-fold in Stage II, III, and IV colon cancers, as well as in colon adenomas and colon cancer cell lines.

It localises to the secreted. In Homo sapiens (Human), this protein is von Willebrand factor A domain-containing protein 2 (VWA2).